A 226-amino-acid chain; its full sequence is ATP synthase subunit a (226 aa).

6 consecutive transmembrane segments (helical) span residues 17-37, 79-99, 105-125, 134-154, 176-196, and 199-219; these read FSYF…AMMA, LVAT…LPGF, SLNL…FEGI, FAHF…IEIV, LFLM…AYVL, and FMAF…LAGA.

This sequence belongs to the ATPase A chain family. F-type ATPases have 2 components, CF(1) - the catalytic core - and CF(0) - the membrane proton channel. CF(1) has five subunits: alpha(3), beta(3), gamma(1), delta(1), epsilon(1). CF(0) has three main subunits: a(1), b(2) and c(9-12). The alpha and beta chains form an alternating ring which encloses part of the gamma chain. CF(1) is attached to CF(0) by a central stalk formed by the gamma and epsilon chains, while a peripheral stalk is formed by the delta and b chains.

The protein localises to the cell inner membrane. Key component of the proton channel; it plays a direct role in the translocation of protons across the membrane. The polypeptide is ATP synthase subunit a (Campylobacter jejuni subsp. doylei (strain ATCC BAA-1458 / RM4099 / 269.97)).